We begin with the raw amino-acid sequence, 494 residues long: Cytochrome P450 2A7 (494 aa).

C439 contributes to the heme binding site.

The protein belongs to the cytochrome P450 family. Heme is required as a cofactor.

The protein resides in the endoplasmic reticulum membrane. It localises to the microsome membrane. It carries out the reaction an organic molecule + reduced [NADPH--hemoprotein reductase] + O2 = an alcohol + oxidized [NADPH--hemoprotein reductase] + H2O + H(+). Its function is as follows. Cytochromes P450 are a group of heme-thiolate monooxygenases. In liver microsomes, this enzyme is involved in an NADPH-dependent electron transport pathway. It oxidizes a variety of structurally unrelated compounds, including steroids, fatty acids, and xenobiotics. The polypeptide is Cytochrome P450 2A7 (CYP2A7) (Homo sapiens (Human)).